The primary structure comprises 291 residues: MQENLLEKQFLNHPLYAKIQELKALNLACNFSLDDSVNLSTNSQAKDEILAIAKELKPWRKGPFKIDDLFIDTEWQSFIKFNILKPFMNEISQKCVADIGCNNGYYMFKMLEFNPAKLIGFDPSIKYRLQFELINALAKTPIKYELLGVEDLPSYGLKFDVIFCLGVIYHRSDPIKMLKDLKAGLNKNGVVFLDTMYIEDEREIALVPNKTYSKIPNIYFVPSISALKNWCERAGFKEFEVLATKKTDENEQRKTEWIDSFSLENFLDPKDKNLTIEGYEAPKRVYIRIKI.

Carboxy-S-adenosyl-L-methionine-binding positions include K61, W75, K80, G100, 122–124, 149–150, Y169, and R284; these read DPS and VE.

The protein belongs to the class I-like SAM-binding methyltransferase superfamily. CmoB family. In terms of assembly, homotetramer.

It carries out the reaction carboxy-S-adenosyl-L-methionine + 5-hydroxyuridine(34) in tRNA = 5-carboxymethoxyuridine(34) in tRNA + S-adenosyl-L-homocysteine + H(+). In terms of biological role, catalyzes carboxymethyl transfer from carboxy-S-adenosyl-L-methionine (Cx-SAM) to 5-hydroxyuridine (ho5U) to form 5-carboxymethoxyuridine (cmo5U) at position 34 in tRNAs. This Campylobacter jejuni (strain RM1221) protein is tRNA U34 carboxymethyltransferase.